A 105-amino-acid chain; its full sequence is Large ribosomal subunit protein eL36 (105 aa).

The disordered stretch occupies residues 9–31 (VGLNKGHKVTKNVSKPRHSRRRR). Basic residues predominate over residues 13 to 31 (KGHKVTKNVSKPRHSRRRR). Lys62 bears the N6-acetyllysine mark.

The protein belongs to the eukaryotic ribosomal protein eL36 family. As to quaternary structure, component of the large ribosomal subunit.

It is found in the cytoplasm. The protein localises to the cytosol. Its function is as follows. Component of the large ribosomal subunit. The ribosome is a large ribonucleoprotein complex responsible for the synthesis of proteins in the cell. This is Large ribosomal subunit protein eL36 (RPL36) from Oryctolagus cuniculus (Rabbit).